The primary structure comprises 307 residues: MRTLRIGIVGLGGIAQKAWLPVLTNTAGWTLQGAWSPSRDKALRICESWRIPYVDSLANLASSCDAVFVHSSTASHYAVVSELLNAGVHVCVDKPLAENLRDAERLVALAAQKKLTLMVGFNRRFAPLYRELKTRLGTAASLRMDKHRTDSVGPHDLRFTLLDDYLHVVDTALWLAGGEARLASGTLLTSESGEMCYAEHHFSADKLQITTSMHRRAGSQRESVQAVTDGGLYDVTDMREWREERGQGILIKPIPSWQTTLEQRGFVGCARHFIDCVQNQTVPETAGEQAILAQRVVEALWRDAISE.

It belongs to the Gfo/Idh/MocA family.

In Salmonella typhimurium (strain LT2 / SGSC1412 / ATCC 700720), this protein is Putative oxidoreductase YceM (yceM).